We begin with the raw amino-acid sequence, 170 residues long: Adenine phosphoribosyltransferase (170 aa).

Belongs to the purine/pyrimidine phosphoribosyltransferase family. Homodimer.

It localises to the cytoplasm. It catalyses the reaction AMP + diphosphate = 5-phospho-alpha-D-ribose 1-diphosphate + adenine. The protein operates within purine metabolism; AMP biosynthesis via salvage pathway; AMP from adenine: step 1/1. Its function is as follows. Catalyzes a salvage reaction resulting in the formation of AMP, that is energically less costly than de novo synthesis. The protein is Adenine phosphoribosyltransferase of Mesoplasma florum (strain ATCC 33453 / NBRC 100688 / NCTC 11704 / L1) (Acholeplasma florum).